The sequence spans 181 residues: Protein Syd (181 aa).

Belongs to the Syd family.

The protein localises to the cell inner membrane. Its function is as follows. Interacts with the SecY protein in vivo. May bind preferentially to an uncomplexed state of SecY, thus functioning either as a chelating agent for excess SecY in the cell or as a regulatory factor that negatively controls the translocase function. The polypeptide is Protein Syd (Klebsiella pneumoniae subsp. pneumoniae (strain ATCC 700721 / MGH 78578)).